The following is a 118-amino-acid chain: MTTLNQAHCEACRADAPQVSDEELPVLLKQIPDWNIEVRDGVMQLEKVFLFKNFKFALAFTNAMGEISEAEGHHPGLLTEWGKVTVTWWSHSIKGLHRNDFIMAARTDEVAKDAEGRK.

Belongs to the pterin-4-alpha-carbinolamine dehydratase family.

It catalyses the reaction (4aS,6R)-4a-hydroxy-L-erythro-5,6,7,8-tetrahydrobiopterin = (6R)-L-erythro-6,7-dihydrobiopterin + H2O. This is Putative pterin-4-alpha-carbinolamine dehydratase from Pseudomonas fluorescens (strain SBW25).